A 155-amino-acid chain; its full sequence is MAPK regulated corepressor interacting protein 2 (155 aa).

Met-1 is modified (N-acetylmethionine). The segment at 1–59 (MYTITKGPSKLVAQRRTGPTQQQVESRLGELLKCRHSAPTPQHPRAQPPGPWPLSSPGP) is disordered. Arg-35 carries the post-translational modification Omega-N-methylarginine. Residues 46 to 56 (AQPPGPWPLSS) show a composition bias toward pro residues. Ser-56 carries the post-translational modification Phosphoserine. Position 60 is an omega-N-methylarginine (Arg-60). Position 77 is a phosphoserine (Ser-77).

Belongs to the MCRIP family. In terms of assembly, interacts with DDX6. Interacts with MCRIP1.

The protein localises to the cytoplasm. It localises to the stress granule. Its subcellular location is the nucleus. This is MAPK regulated corepressor interacting protein 2 (MCRIP2) from Bos taurus (Bovine).